The following is a 248-amino-acid chain: tRNA (guanine-N(1)-)-methyltransferase (248 aa).

S-adenosyl-L-methionine contacts are provided by residues glycine 113 and 133-138; that span reads IGDYVL.

Belongs to the RNA methyltransferase TrmD family. As to quaternary structure, homodimer.

The protein localises to the cytoplasm. The enzyme catalyses guanosine(37) in tRNA + S-adenosyl-L-methionine = N(1)-methylguanosine(37) in tRNA + S-adenosyl-L-homocysteine + H(+). Functionally, specifically methylates guanosine-37 in various tRNAs. The sequence is that of tRNA (guanine-N(1)-)-methyltransferase from Shewanella frigidimarina (strain NCIMB 400).